Consider the following 1107-residue polypeptide: OTU domain-containing protein 4 (1107 aa).

Residue Met1 is modified to N-acetylmethionine. Positions Leu34–Ile155 constitute an OTU domain. The tract at residues Val39–Cys45 is cys-loop. Asp42 is a catalytic residue. The active-site Nucleophile is Cys45. The variable-loop stretch occupies residues Leu94–Val104. Tyr120 carries the post-translational modification Phosphotyrosine. Phosphoserine occurs at positions 126 and 128. The residue at position 131 (Thr131) is a Phosphothreonine. Residues Phe143–His148 are his-loop. His148 is a catalytic residue. Phosphoserine is present on residues Ser166, Ser199, Ser202, and Ser204. Acidic residues predominate over residues Glu195–Asp206. Disordered stretches follow at residues Glu195–Leu239 and Lys322–His431. The span at Gly226–Ser236 shows a compositional bias: polar residues. A Phosphoserine modification is found at Ser340. Residues Ser392–Ser403 are compositionally biased toward low complexity. Residues Arg419–His431 are compositionally biased toward basic and acidic residues. Residue Tyr438 is modified to Phosphotyrosine. At Ser442 the chain carries Phosphoserine. Tyr459 carries the post-translational modification Phosphotyrosine. The tract at residues Pro470–Asn568 is disordered. Residues Ser473–Asn486 show a composition bias toward low complexity. Residues His495–Glu528 are compositionally biased toward basic and acidic residues. Residues Ser544 and Ser895 each carry the phosphoserine modification. A disordered region spans residues Leu918–Thr1107. Residues Asn963–Thr994 show a composition bias toward basic and acidic residues. Phosphoserine occurs at positions 1000, 1005, 1016, and 1017. Over residues Ser1032–Gly1041 the composition is skewed to polar residues. The residue at position 1042 (Ser1042) is a Phosphoserine. Composition is skewed to basic and acidic residues over residues Val1060–Gln1079 and Tyr1089–Thr1107.

Interacts with MYD88; the interaction is direct. Interacts with ALKBH3; the interaction is direct. Interacts with USP7; the interaction is direct. Interacts with USP9X; the interaction is direct. Phosphorylation at Ser-202 and Ser-204 activates 'Lys-63'-specific deubiquitinase activity. Induced upon stimulation with IL1B.

Its subcellular location is the cytoplasm. The protein localises to the nucleus. It carries out the reaction Thiol-dependent hydrolysis of ester, thioester, amide, peptide and isopeptide bonds formed by the C-terminal Gly of ubiquitin (a 76-residue protein attached to proteins as an intracellular targeting signal).. Phosphorylation on Ser-202 and Ser-204 induces 'Lys-63'-specific deubiquitinase activity. Functionally, deubiquitinase which hydrolyzes the isopeptide bond between the ubiquitin C-terminus and the lysine epsilon-amino group of the target protein. May negatively regulate inflammatory and pathogen recognition signaling in innate immune response. Upon phosphorylation at Ser-202 and Ser-204 residues, via IL-1 receptor and Toll-like receptor signaling pathway, specifically deubiquitinates 'Lys-63'-polyubiquitinated MYD88 adapter protein triggering down-regulation of NF-kappa-B-dependent transcription of inflammatory mediators. Independently of the catalytic activity, acts as a scaffold for alternative deubiquitinases to assemble specific deubiquitinase-substrate complexes. Associates with USP7 and USP9X deubiquitinases to stabilize alkylation repair enzyme ALKBH3, thereby promoting the repair of alkylated DNA lesions. This Mus musculus (Mouse) protein is OTU domain-containing protein 4.